The primary structure comprises 187 residues: Ribosome maturation factor RimP (187 aa).

The protein belongs to the RimP family.

The protein localises to the cytoplasm. Its function is as follows. Required for maturation of 30S ribosomal subunits. This is Ribosome maturation factor RimP from Phenylobacterium zucineum (strain HLK1).